We begin with the raw amino-acid sequence, 30 residues long: GLFKTLIKGAGKMLGHVAKQFLGSQGQPES.

Expressed by the skin glands.

Its subcellular location is the secreted. Functionally, has antimicrobial activity. This is Dermaseptin-3.1TR from Phyllomedusa trinitatis (Trinidad leaf frog).